A 264-amino-acid polypeptide reads, in one-letter code: Proliferating cell nuclear antigen 2 (264 aa).

A DNA-binding region spans residues 61–80; it reads RCDRNLSMGMNLGNMSKMLK.

Belongs to the PCNA family. In terms of assembly, homo- and heterotrimer. Interacts with POLH, ATXR5 and ATXR6.

Its subcellular location is the nucleus. This protein is an auxiliary protein of DNA polymerase delta and is involved in the control of eukaryotic DNA replication by increasing the polymerase's processibility during elongation of the leading strand. May be involved in UV resistance. This chain is Proliferating cell nuclear antigen 2 (PCNA2), found in Arabidopsis thaliana (Mouse-ear cress).